Reading from the N-terminus, the 587-residue chain is Aspartate--tRNA ligase (587 aa).

Residue Glu-174 coordinates L-aspartate. The interval 198 to 201 is aspartate; the sequence is QITK. Arg-220 contacts L-aspartate. ATP-binding positions include 220-222 and Gln-229; that span reads RDE. L-aspartate is bound at residue His-443. Position 477 (Glu-477) interacts with ATP. Position 484 (Arg-484) interacts with L-aspartate. Residue 529–532 coordinates ATP; the sequence is GLDR.

Belongs to the class-II aminoacyl-tRNA synthetase family. Type 1 subfamily. In terms of assembly, homodimer.

The protein resides in the cytoplasm. It carries out the reaction tRNA(Asp) + L-aspartate + ATP = L-aspartyl-tRNA(Asp) + AMP + diphosphate. Catalyzes the attachment of L-aspartate to tRNA(Asp) in a two-step reaction: L-aspartate is first activated by ATP to form Asp-AMP and then transferred to the acceptor end of tRNA(Asp). The polypeptide is Aspartate--tRNA ligase (Streptococcus pneumoniae (strain ATCC 700669 / Spain 23F-1)).